The sequence spans 481 residues: Glutamyl-tRNA(Gln) amidotransferase subunit A (481 aa).

Catalysis depends on charge relay system residues K76 and S151. The Acyl-ester intermediate role is filled by S175.

It belongs to the amidase family. GatA subfamily. As to quaternary structure, heterotrimer of A, B and C subunits.

It carries out the reaction L-glutamyl-tRNA(Gln) + L-glutamine + ATP + H2O = L-glutaminyl-tRNA(Gln) + L-glutamate + ADP + phosphate + H(+). Functionally, allows the formation of correctly charged Gln-tRNA(Gln) through the transamidation of misacylated Glu-tRNA(Gln) in organisms which lack glutaminyl-tRNA synthetase. The reaction takes place in the presence of glutamine and ATP through an activated gamma-phospho-Glu-tRNA(Gln). This chain is Glutamyl-tRNA(Gln) amidotransferase subunit A, found in Neisseria meningitidis serogroup C (strain 053442).